Here is a 258-residue protein sequence, read N- to C-terminus: Ubiquinone/menaquinone biosynthesis C-methyltransferase UbiE (258 aa).

Residues T81, D102, and 130–131 contribute to the S-adenosyl-L-methionine site; that span reads NA.

The protein belongs to the class I-like SAM-binding methyltransferase superfamily. MenG/UbiE family.

The enzyme catalyses a 2-demethylmenaquinol + S-adenosyl-L-methionine = a menaquinol + S-adenosyl-L-homocysteine + H(+). It carries out the reaction a 2-methoxy-6-(all-trans-polyprenyl)benzene-1,4-diol + S-adenosyl-L-methionine = a 5-methoxy-2-methyl-3-(all-trans-polyprenyl)benzene-1,4-diol + S-adenosyl-L-homocysteine + H(+). It participates in quinol/quinone metabolism; menaquinone biosynthesis; menaquinol from 1,4-dihydroxy-2-naphthoate: step 2/2. It functions in the pathway cofactor biosynthesis; ubiquinone biosynthesis. Functionally, methyltransferase required for the conversion of demethylmenaquinol (DMKH2) to menaquinol (MKH2) and the conversion of 2-polyprenyl-6-methoxy-1,4-benzoquinol (DDMQH2) to 2-polyprenyl-3-methyl-6-methoxy-1,4-benzoquinol (DMQH2). The sequence is that of Ubiquinone/menaquinone biosynthesis C-methyltransferase UbiE from Allorhizobium ampelinum (strain ATCC BAA-846 / DSM 112012 / S4) (Agrobacterium vitis (strain S4)).